The primary structure comprises 471 residues: Galactolipase DONGLE, chloroplastic (471 aa).

Residues methionine 1–glutamine 88 constitute a chloroplast transit peptide. The disordered stretch occupies residues serine 44–serine 71. The GXSXG motif lies at glycine 284–glycine 288. Serine 286 functions as the Acyl-ester intermediate in the catalytic mechanism. Residues aspartate 349 and histidine 400 each act as charge relay system in the active site.

This sequence belongs to the AB hydrolase superfamily. Lipase family. Expressed in leaves and seedlings. Not detected in flowers, siliques or roots.

It is found in the plastid. The protein localises to the chloroplast. The catalysed reaction is a 1,2-diacyl-3-O-(beta-D-galactosyl)-sn-glycerol + 2 H2O = 3-beta-D-galactosyl-sn-glycerol + 2 a fatty acid + 2 H(+). The enzyme catalyses a 1,2-diacyl-sn-glycero-3-phosphocholine + H2O = a 2-acyl-sn-glycero-3-phosphocholine + a fatty acid + H(+). It catalyses the reaction a 1,2-diacyl-3-O-[alpha-D-galactosyl-(1-&gt;6)-beta-D-galactosyl]-sn-glycerol + H2O = acyl-3-O-[alpha-D-galactosyl-(1-&gt;6)-beta-D-galactosyl]-sn-glycerol + a fatty acid + H(+). Functionally, sn-1-specific phospholipase that releases free fatty acids from phosphatidylcholine. Has a higher galactolipase activity than phospholipase A1 activity when digalactosyldiacylglycerol (DGDG) is used as substrate. Catalyzes the initial step of jasmonic acid biosynthesis. Required for the biosynthesis of basal-level endogenous jasmonate in vegetative tissues. Regulates leaves growth. Not essential for jasmonate biosynthesis after wounding or upon pathogen infection. This chain is Galactolipase DONGLE, chloroplastic, found in Arabidopsis thaliana (Mouse-ear cress).